A 598-amino-acid polypeptide reads, in one-letter code: Aspartate--tRNA(Asp/Asn) ligase (598 aa).

Glu177 contributes to the L-aspartate binding site. An aspartate region spans residues Gln201 to Lys204. Arg223 provides a ligand contact to L-aspartate. Residues Arg223–Glu225 and Gln232 each bind ATP. His456 lines the L-aspartate pocket. Glu493 serves as a coordination point for ATP. L-aspartate is bound at residue Arg500. Gly545 to Arg548 contributes to the ATP binding site.

It belongs to the class-II aminoacyl-tRNA synthetase family. Type 1 subfamily. As to quaternary structure, homodimer.

The protein resides in the cytoplasm. The enzyme catalyses tRNA(Asx) + L-aspartate + ATP = L-aspartyl-tRNA(Asx) + AMP + diphosphate. In terms of biological role, aspartyl-tRNA synthetase with relaxed tRNA specificity since it is able to aspartylate not only its cognate tRNA(Asp) but also tRNA(Asn). Reaction proceeds in two steps: L-aspartate is first activated by ATP to form Asp-AMP and then transferred to the acceptor end of tRNA(Asp/Asn). The sequence is that of Aspartate--tRNA(Asp/Asn) ligase from Prochlorococcus marinus subsp. pastoris (strain CCMP1986 / NIES-2087 / MED4).